The following is a 422-amino-acid chain: UDP-N-acetylglucosamine 1-carboxyvinyltransferase (422 aa).

22–23 (KN) lines the phosphoenolpyruvate pocket. Arg-93 provides a ligand contact to UDP-N-acetyl-alpha-D-glucosamine. The active-site Proton donor is the Cys-117. A 2-(S-cysteinyl)pyruvic acid O-phosphothioketal modification is found at Cys-117. UDP-N-acetyl-alpha-D-glucosamine-binding positions include 122–126 (RPVDL), Asp-308, and Leu-330.

This sequence belongs to the EPSP synthase family. MurA subfamily.

Its subcellular location is the cytoplasm. It carries out the reaction phosphoenolpyruvate + UDP-N-acetyl-alpha-D-glucosamine = UDP-N-acetyl-3-O-(1-carboxyvinyl)-alpha-D-glucosamine + phosphate. The protein operates within cell wall biogenesis; peptidoglycan biosynthesis. Functionally, cell wall formation. Adds enolpyruvyl to UDP-N-acetylglucosamine. This chain is UDP-N-acetylglucosamine 1-carboxyvinyltransferase, found in Helicobacter acinonychis (strain Sheeba).